A 114-amino-acid polypeptide reads, in one-letter code: Flagellar hook-basal body complex protein FliE (114 aa).

The protein belongs to the FliE family.

The protein resides in the bacterial flagellum basal body. This is Flagellar hook-basal body complex protein FliE from Desulfitobacterium hafniense (strain DSM 10664 / DCB-2).